Reading from the N-terminus, the 240-residue chain is Uridylate kinase (240 aa).

An ATP-binding site is contributed by 9–12 (KLSG). G51 contacts UMP. The ATP site is built by G52 and R56. UMP is bound by residues D71 and 132–139 (TGNPFFTT). Residues T159, Y165, and D168 each contribute to the ATP site.

The protein belongs to the UMP kinase family. As to quaternary structure, homohexamer.

The protein resides in the cytoplasm. It catalyses the reaction UMP + ATP = UDP + ADP. The protein operates within pyrimidine metabolism; CTP biosynthesis via de novo pathway; UDP from UMP (UMPK route): step 1/1. With respect to regulation, inhibited by UTP. In terms of biological role, catalyzes the reversible phosphorylation of UMP to UDP. This Synechococcus elongatus (strain ATCC 33912 / PCC 7942 / FACHB-805) (Anacystis nidulans R2) protein is Uridylate kinase.